Reading from the N-terminus, the 428-residue chain is Probable glucose-6-phosphate isomerase (428 aa).

Glu269 (proton donor) is an active-site residue. Catalysis depends on residues His290 and Lys401.

This sequence belongs to the GPI family.

The protein localises to the cytoplasm. It catalyses the reaction alpha-D-glucose 6-phosphate = beta-D-fructose 6-phosphate. Its pathway is carbohydrate biosynthesis; gluconeogenesis. It functions in the pathway carbohydrate degradation; glycolysis; D-glyceraldehyde 3-phosphate and glycerone phosphate from D-glucose: step 2/4. Catalyzes the reversible isomerization of glucose-6-phosphate to fructose-6-phosphate. The protein is Probable glucose-6-phosphate isomerase of Natronomonas pharaonis (strain ATCC 35678 / DSM 2160 / CIP 103997 / JCM 8858 / NBRC 14720 / NCIMB 2260 / Gabara) (Halobacterium pharaonis).